The chain runs to 247 residues: UPF0280 protein MmarC5_0355 (247 aa).

This sequence belongs to the UPF0280 family.

In Methanococcus maripaludis (strain C5 / ATCC BAA-1333), this protein is UPF0280 protein MmarC5_0355.